A 147-amino-acid polypeptide reads, in one-letter code: Hemoglobin subunit beta (147 aa).

N-acetylvaline is present on Val-2. The Globin domain occupies 3–147 (HLTGEEKGIV…VATALAHKYH (145 aa)). The residue at position 13 (Thr-13) is a Phosphothreonine. The residue at position 45 (Ser-45) is a Phosphoserine. Lys-60 carries the N6-acetyllysine modification. Position 64 (His-64) interacts with heme b. The residue at position 83 (Lys-83) is an N6-acetyllysine. His-93 contributes to the heme b binding site. Cys-94 bears the S-nitrosocysteine mark. Lys-145 carries the N6-acetyllysine modification.

Belongs to the globin family. As to quaternary structure, heterotetramer of two alpha chains and two beta chains. Red blood cells.

Functionally, involved in oxygen transport from the lung to the various peripheral tissues. The protein is Hemoglobin subunit beta (HBB) of Rhinolophus ferrumequinum (Greater horseshoe bat).